Reading from the N-terminus, the 346-residue chain is Putative F-box/kelch-repeat protein At1g27420 (346 aa).

The F-box domain occupies proline 9–leucine 56. Kelch repeat units follow at residues glutamate 62–glycine 109, lysine 111–glycine 167, leucine 168–serine 215, leucine 217–lysine 257, and tyrosine 259–asparagine 300.

This Arabidopsis thaliana (Mouse-ear cress) protein is Putative F-box/kelch-repeat protein At1g27420.